We begin with the raw amino-acid sequence, 507 residues long: Congo red hypersensitive protein 1 (507 aa).

An N-terminal signal peptide occupies residues 1-22; sequence MKVLDLLTVLSASSLLSTFAAA. The GH16 domain occupies 34–260; that stretch reads ASSTASCNPL…KVIVTDYSTG (227 aa). A disulfide bond links Cys40 and Cys48. A glycan (N-linked (GlcNAc...) asparagine) is linked at Asn117. Glu134 functions as the Nucleophile in the catalytic mechanism. The Proton donor role is filled by Glu138. Chitin is bound at residue Glu138. Residues Asn177 and Asn201 are each glycosylated (N-linked (GlcNAc...) asparagine). 2 residues coordinate chitin: Trp219 and Thr230. 2 disordered regions span residues 329–368 and 381–478; these read SSSA…SSKT and SSFE…TNSV. Low complexity-rich tracts occupy residues 381-439 and 451-477; these read SSFE…PVQD and TSST…STNS. A lipid anchor (GPI-anchor amidated asparagine) is attached at Asn482. The propeptide at 483-507 is removed in mature form; it reads GADLAQSLPREGKLFSVLVALLALL.

It belongs to the glycosyl hydrolase 16 family. CRH1 subfamily. Post-translationally, the GPI-anchor is attached to the protein in the endoplasmic reticulum and serves to target the protein to the cell surface. There, the glucosamine-inositol phospholipid moiety is cleaved off and the GPI-modified mannoprotein is covalently attached via its lipidless GPI glycan remnant to the 1,6-beta-glucan of the outer cell wall layer.

The protein resides in the secreted. It is found in the cell wall. Its subcellular location is the membrane. It carries out the reaction Random endo-hydrolysis of N-acetyl-beta-D-glucosaminide (1-&gt;4)-beta-linkages in chitin and chitodextrins.. Functionally, dual chitinase/transglycosylase that plays a role in cell wall architecture. Chitinase and transglycosylase activities are coupled. Required for the polysaccharide cross-linking at the septa and the cell wall. More specifically, transfers chitin to both beta(1-3)- and beta(1-6)glucan in the cell wall. The minimal number of intact hexopyranose units required in the molecule of the acceptor oligosaccharide is two and the effectivity of the acceptor increased with the increasing length of its oligosaccharide chain. The polypeptide is Congo red hypersensitive protein 1 (Saccharomyces cerevisiae (strain ATCC 204508 / S288c) (Baker's yeast)).